The sequence spans 72 residues: Penaeidin-2d (72 aa).

Positions Met1–Ala21 are cleaved as a signal peptide. Position 22 is a pyrrolidone carboxylic acid (Gln22). 3 cysteine pairs are disulfide-bonded: Cys45-Cys59, Cys48-Cys66, and Cys60-Cys67. Lys71 carries the lysine amide modification.

This sequence belongs to the penaeidin family.

The protein resides in the cytoplasmic granule. Antibacterial and antifungal activity. Presents chitin-binding activity. The sequence is that of Penaeidin-2d from Penaeus setiferus (Atlantic white shrimp).